The following is a 101-amino-acid chain: Ubiquitin-related modifier 1 (101 aa).

Position 101 is a 1-thioglycine (G101). A Glycyl lysine isopeptide (Gly-Lys) (interchain with K-? in acceptor proteins) cross-link involves residue G101.

This sequence belongs to the URM1 family. In terms of processing, C-terminal thiocarboxylation occurs in 2 steps, it is first acyl-adenylated (-COAMP) via the hesA/moeB/thiF part of UBA4, then thiocarboxylated (-COSH) via the rhodanese domain of UBA4.

It is found in the cytoplasm. It functions in the pathway tRNA modification; 5-methoxycarbonylmethyl-2-thiouridine-tRNA biosynthesis. Acts as a sulfur carrier required for 2-thiolation of mcm(5)S(2)U at tRNA wobble positions of cytosolic tRNA(Lys), tRNA(Glu) and tRNA(Gln). Serves as sulfur donor in tRNA 2-thiolation reaction by being thiocarboxylated (-COSH) at its C-terminus by the MOCS3 homolog UBA4. The sulfur is then transferred to tRNA to form 2-thiolation of mcm(5)S(2)U. Prior mcm(5) tRNA modification by the elongator complex is required for 2-thiolation. Also acts as a ubiquitin-like protein (UBL) that is covalently conjugated via an isopeptide bond to lysine residues of target proteins such as AHP1. The thiocarboxylated form serves as substrate for conjugation and oxidative stress specifically induces the formation of UBL-protein conjugates. The sequence is that of Ubiquitin-related modifier 1 from Kluyveromyces lactis (strain ATCC 8585 / CBS 2359 / DSM 70799 / NBRC 1267 / NRRL Y-1140 / WM37) (Yeast).